Reading from the N-terminus, the 536-residue chain is Multicopper oxidase CueO (536 aa).

Positions 1–28 (MLRRDFLKYSVALGVASALPLWSRAAFA) form a signal peptide, tat-type signal. Plastocyanin-like domains lie at 53 to 165 (KAGQ…IEDD), 229 to 295 (GWLR…AFDL), and 424 to 536 (FHNA…GFTV). 4 residues coordinate Cu cation: H101, H103, H141, and H143. Cu cation contacts are provided by H463, H466, H468, H519, C520, H521, and H525.

This sequence belongs to the multicopper oxidase family. As to quaternary structure, monomer. Requires Cu cation as cofactor. In terms of processing, predicted to be exported by the Tat system. The position of the signal peptide cleavage has not been experimentally proven.

The protein resides in the periplasm. The catalysed reaction is 4 Cu(+) + O2 + 4 H(+) = 4 Cu(2+) + 2 H2O. Multicopper oxidase involved in copper homeostasis and copper tolerance under both aerobic and anaerobic conditions. Is responsible for the oxidation of Cu(+) to the less harmful Cu(2+) in the periplasm, thereby preventing Cu(+) from entering the cytoplasm. This chain is Multicopper oxidase CueO (cueO), found in Salmonella typhimurium (strain LT2 / SGSC1412 / ATCC 700720).